A 194-amino-acid polypeptide reads, in one-letter code: Methylthioribulose-1-phosphate dehydratase (194 aa).

Residues H84 and H86 each contribute to the Zn(2+) site.

This sequence belongs to the aldolase class II family. MtnB subfamily. Zn(2+) is required as a cofactor.

The catalysed reaction is 5-(methylsulfanyl)-D-ribulose 1-phosphate = 5-methylsulfanyl-2,3-dioxopentyl phosphate + H2O. Its pathway is amino-acid biosynthesis; L-methionine biosynthesis via salvage pathway; L-methionine from S-methyl-5-thio-alpha-D-ribose 1-phosphate: step 2/6. Functionally, catalyzes the dehydration of methylthioribulose-1-phosphate (MTRu-1-P) into 2,3-diketo-5-methylthiopentyl-1-phosphate (DK-MTP-1-P). This Cronobacter sakazakii (Enterobacter sakazakii) protein is Methylthioribulose-1-phosphate dehydratase.